We begin with the raw amino-acid sequence, 183 residues long: TATA-box-binding protein (183 aa).

2 tandem repeats follow at residues 8-84 (VENI…VDKI) and 99-175 (IQNI…KERL).

This sequence belongs to the TBP family.

Functionally, general factor that plays a role in the activation of archaeal genes transcribed by RNA polymerase. Binds specifically to the TATA box promoter element which lies close to the position of transcription initiation. This chain is TATA-box-binding protein, found in Methanosphaera stadtmanae (strain ATCC 43021 / DSM 3091 / JCM 11832 / MCB-3).